A 125-amino-acid polypeptide reads, in one-letter code: Cu-Zn superoxide dismutase-like protein OPG175 (125 aa).

A disulfide bond links cysteine 52 and cysteine 102.

This sequence belongs to the Cu-Zn superoxide dismutase family.

It localises to the virion. It is found in the host cytoplasm. Its function is as follows. Superoxide dismutase-like protein with no enzymatic activity. The chain is Cu-Zn superoxide dismutase-like protein OPG175 (OPG175) from Cowpox virus (strain Brighton Red) (CPV).